We begin with the raw amino-acid sequence, 167 residues long: Crossover junction endodeoxyribonuclease RuvC (167 aa).

Active-site residues include Asp-7, Glu-67, and Asp-139. Residues Asp-7, Glu-67, and Asp-139 each coordinate Mg(2+).

Belongs to the RuvC family. Homodimer which binds Holliday junction (HJ) DNA. The HJ becomes 2-fold symmetrical on binding to RuvC with unstacked arms; it has a different conformation from HJ DNA in complex with RuvA. In the full resolvosome a probable DNA-RuvA(4)-RuvB(12)-RuvC(2) complex forms which resolves the HJ. Requires Mg(2+) as cofactor.

It is found in the cytoplasm. It carries out the reaction Endonucleolytic cleavage at a junction such as a reciprocal single-stranded crossover between two homologous DNA duplexes (Holliday junction).. Functionally, the RuvA-RuvB-RuvC complex processes Holliday junction (HJ) DNA during genetic recombination and DNA repair. Endonuclease that resolves HJ intermediates. Cleaves cruciform DNA by making single-stranded nicks across the HJ at symmetrical positions within the homologous arms, yielding a 5'-phosphate and a 3'-hydroxyl group; requires a central core of homology in the junction. The consensus cleavage sequence is 5'-(A/T)TT(C/G)-3'. Cleavage occurs on the 3'-side of the TT dinucleotide at the point of strand exchange. HJ branch migration catalyzed by RuvA-RuvB allows RuvC to scan DNA until it finds its consensus sequence, where it cleaves and resolves the cruciform DNA. The sequence is that of Crossover junction endodeoxyribonuclease RuvC from Zymomonas mobilis subsp. mobilis (strain ATCC 31821 / ZM4 / CP4).